We begin with the raw amino-acid sequence, 163 residues long: MRCVQCGHLEDKVIDSRMSKDGTTIRRRRVCLRCDYRYTTYEQIERTELRVVKRDNLREALNREKILRGLVKACEKRPVSMDRLDRAVEEIISELHRDHLREVPSSEIGKKVIEKLYAIDPVAYIRYVSVYRQFSNVEEFIQEITQMRHQTLIDPLQRKLPIL.

A zinc finger lies at 3 to 34 (CVQCGHLEDKVIDSRMSKDGTTIRRRRVCLRC). One can recognise an ATP-cone domain in the interval 49-139 (LRVVKRDNLR…VYRQFSNVEE (91 aa)).

The protein belongs to the NrdR family. Zn(2+) is required as a cofactor.

Negatively regulates transcription of bacterial ribonucleotide reductase nrd genes and operons by binding to NrdR-boxes. In Akkermansia muciniphila (strain ATCC BAA-835 / DSM 22959 / JCM 33894 / BCRC 81048 / CCUG 64013 / CIP 107961 / Muc), this protein is Transcriptional repressor NrdR.